The chain runs to 113 residues: UPF0416 protein RF_0879 (113 aa).

It belongs to the UPF0416 family.

This chain is UPF0416 protein RF_0879, found in Rickettsia felis (strain ATCC VR-1525 / URRWXCal2) (Rickettsia azadi).